The chain runs to 270 residues: Tetraspanin-17 (270 aa).

Topologically, residues Met-1–Tyr-19 are cytoplasmic. A helical membrane pass occupies residues Phe-20 to Leu-40. Residues Trp-41–Pro-63 lie on the Extracellular side of the membrane. Asn-51 carries an N-linked (GlcNAc...) asparagine glycan. Residues Val-64 to Gly-84 form a helical membrane-spanning segment. Residues Ala-85–Lys-94 lie on the Cytoplasmic side of the membrane. A helical membrane pass occupies residues Phe-95–Phe-115. Residues Val-116–Asn-234 lie on the Extracellular side of the membrane. 4 cysteine pairs are disulfide-bonded: Cys-155/Cys-223, Cys-156/Cys-188, Cys-172/Cys-182, and Cys-189/Cys-202. An N-linked (GlcNAc...) asparagine glycan is attached at Asn-171. The helical transmembrane segment at Leu-235 to Leu-255 threads the bilayer. Over Ala-256–Trp-270 the chain is Cytoplasmic.

The protein belongs to the tetraspanin (TM4SF) family. Interacts with ADAM10; the interaction influences ADAM10 substrate specificity, endocytosis and turnover.

The protein resides in the cell membrane. Functionally, part of TspanC8 subgroup, composed of 6 members that interact with the transmembrane metalloprotease ADAM10. This interaction is required for ADAM10 exit from the endoplasmic reticulum and for enzymatic maturation and trafficking to the cell surface as well as substrate specificity. Different TspanC8/ADAM10 complexes have distinct substrates. Seems to regulate VE-cadherin expression in endothelial cells probably through interaction with ADAM10, promoting leukocyte transmigration. The sequence is that of Tetraspanin-17 (Tspan17) from Mus musculus (Mouse).